The chain runs to 127 residues: uncharacterized protein (127 aa).

2 helical membrane-spanning segments follow: residues 13 to 35 and 57 to 81; these read ILLLISIFFLVCIISLVGIGIIF and AVLIVLGVFAICFMIIQLVISIMIW.

It localises to the cell membrane. This is an uncharacterized protein from Mycoplasma genitalium (strain ATCC 33530 / DSM 19775 / NCTC 10195 / G37) (Mycoplasmoides genitalium).